A 442-amino-acid polypeptide reads, in one-letter code: tRNA modification GTPase MnmE (442 aa).

Positions 24, 84, and 124 each coordinate (6S)-5-formyl-5,6,7,8-tetrahydrofolate. The TrmE-type G domain occupies 218 to 366 (GARVALFGPV…LRDDMLGRLW (149 aa)). Residues 228–233 (NAGKST), 247–253 (DDEPGTT), and 272–275 (DTAG) contribute to the GTP site. S232 and T253 together coordinate Mg(2+). Residue K442 participates in (6S)-5-formyl-5,6,7,8-tetrahydrofolate binding.

This sequence belongs to the TRAFAC class TrmE-Era-EngA-EngB-Septin-like GTPase superfamily. TrmE GTPase family. Homodimer. Heterotetramer of two MnmE and two MnmG subunits. The cofactor is K(+).

It is found in the cytoplasm. In terms of biological role, exhibits a very high intrinsic GTPase hydrolysis rate. Involved in the addition of a carboxymethylaminomethyl (cmnm) group at the wobble position (U34) of certain tRNAs, forming tRNA-cmnm(5)s(2)U34. The chain is tRNA modification GTPase MnmE from Myxococcus xanthus (strain DK1622).